The following is a 247-amino-acid chain: Serine protease 1 (247 aa).

The N-terminal stretch at methionine 1–alanine 15 is a signal peptide. Residues alanine 16 to lysine 23 constitute a propeptide, activation peptide. In terms of domain architecture, Peptidase S1 spans isoleucine 24–alanine 244. 5 cysteine pairs are disulfide-bonded: cysteine 30–cysteine 160, cysteine 48–cysteine 64, cysteine 139–cysteine 206, cysteine 171–cysteine 185, and cysteine 196–cysteine 220. Catalysis depends on histidine 63, which acts as the Charge relay system. Ca(2+) contacts are provided by glutamate 75, asparagine 77, valine 80, and glutamate 85. Aspartate 107 acts as the Charge relay system in catalysis. Tyrosine 154 is modified (sulfotyrosine). Serine 200 serves as the catalytic Charge relay system.

The protein belongs to the peptidase S1 family. As to quaternary structure, interacts with SERPINA1. It depends on Ca(2+) as a cofactor. Post-translationally, occurs in a single-chain form and a two-chain form, produced by proteolytic cleavage after Arg-122. Sulfation at Tyr-154 increases selectivity towards basic versus apolar residues at the P2' position of inhibitors that bind in a substrate-like fashion. Although the increase in selectivity is relatively small, it may facilitate digestion of a broader range of dietary proteins.

The protein localises to the secreted. The protein resides in the extracellular space. The enzyme catalyses Preferential cleavage: Arg-|-Xaa, Lys-|-Xaa.. Its function is as follows. Has activity against the synthetic substrates Boc-Phe-Ser-Arg-Mec, Boc-Leu-Thr-Arg-Mec, Boc-Gln-Ala-Arg-Mec and Boc-Val-Pro-Arg-Mec. The single-chain form is more active than the two-chain form against all of these substrates. The polypeptide is Serine protease 1 (Homo sapiens (Human)).